The chain runs to 467 residues: Methylenetetrahydrofolate--tRNA-(uracil-5-)-methyltransferase TrmFO (467 aa).

G10–G15 is a binding site for FAD.

It belongs to the MnmG family. TrmFO subfamily. The cofactor is FAD.

It localises to the cytoplasm. The catalysed reaction is uridine(54) in tRNA + (6R)-5,10-methylene-5,6,7,8-tetrahydrofolate + NADH + H(+) = 5-methyluridine(54) in tRNA + (6S)-5,6,7,8-tetrahydrofolate + NAD(+). The enzyme catalyses uridine(54) in tRNA + (6R)-5,10-methylene-5,6,7,8-tetrahydrofolate + NADPH + H(+) = 5-methyluridine(54) in tRNA + (6S)-5,6,7,8-tetrahydrofolate + NADP(+). Catalyzes the folate-dependent formation of 5-methyl-uridine at position 54 (M-5-U54) in all tRNAs. The polypeptide is Methylenetetrahydrofolate--tRNA-(uracil-5-)-methyltransferase TrmFO (Hyphomonas neptunium (strain ATCC 15444)).